A 363-amino-acid chain; its full sequence is Phosphoserine aminotransferase (363 aa).

Arginine 46 is an L-glutamate binding site. Residues 80–81 (AT), tryptophan 106, threonine 156, aspartate 176, and glutamine 199 contribute to the pyridoxal 5'-phosphate site. Lysine 200 bears the N6-(pyridoxal phosphate)lysine mark. 241–242 (NT) serves as a coordination point for pyridoxal 5'-phosphate.

The protein belongs to the class-V pyridoxal-phosphate-dependent aminotransferase family. SerC subfamily. In terms of assembly, homodimer. Pyridoxal 5'-phosphate is required as a cofactor.

It is found in the cytoplasm. It carries out the reaction O-phospho-L-serine + 2-oxoglutarate = 3-phosphooxypyruvate + L-glutamate. The catalysed reaction is 4-(phosphooxy)-L-threonine + 2-oxoglutarate = (R)-3-hydroxy-2-oxo-4-phosphooxybutanoate + L-glutamate. It functions in the pathway amino-acid biosynthesis; L-serine biosynthesis; L-serine from 3-phospho-D-glycerate: step 2/3. The protein operates within cofactor biosynthesis; pyridoxine 5'-phosphate biosynthesis; pyridoxine 5'-phosphate from D-erythrose 4-phosphate: step 3/5. Catalyzes the reversible conversion of 3-phosphohydroxypyruvate to phosphoserine and of 3-hydroxy-2-oxo-4-phosphonooxybutanoate to phosphohydroxythreonine. This Leptospira interrogans serogroup Icterohaemorrhagiae serovar copenhageni (strain Fiocruz L1-130) protein is Phosphoserine aminotransferase.